Consider the following 268-residue polypeptide: MDNLIQKMSEIYSDLHNSNNLIHCLTNAISINDMANAVLSIGQSPFMADNPREVEDVTRKSDSLLVNLGNITDYRIESIKKSVRIANENNIPITLDLVGVSASKLRLDLTLDILKNHTITCIKGNYSEIKSLFIKDLSTKGVDSQKLEVDDVINCCKNLHEKYDSIIVATGQTDIVCANEIYLLNNGDDRLSKITATGCVVGSLIACTLSVSQSIKACVLAISMMNISCEMVDKSVGLSSFKLGLYDNLSRIKWEQIKENIDAKKVES.

Substrate is bound at residue methionine 47. ATP is bound by residues lysine 123 and threonine 170. Alanine 196 lines the substrate pocket.

It belongs to the Thz kinase family. It depends on Mg(2+) as a cofactor.

It catalyses the reaction 5-(2-hydroxyethyl)-4-methylthiazole + ATP = 4-methyl-5-(2-phosphooxyethyl)-thiazole + ADP + H(+). Its pathway is cofactor biosynthesis; thiamine diphosphate biosynthesis; 4-methyl-5-(2-phosphoethyl)-thiazole from 5-(2-hydroxyethyl)-4-methylthiazole: step 1/1. Functionally, catalyzes the phosphorylation of the hydroxyl group of 4-methyl-5-beta-hydroxyethylthiazole (THZ). This Finegoldia magna (strain ATCC 29328 / DSM 20472 / WAL 2508) (Peptostreptococcus magnus) protein is Hydroxyethylthiazole kinase.